Here is a 607-residue protein sequence, read N- to C-terminus: Glutamyl-tRNA(Gln) amidotransferase subunit E (607 aa).

This sequence belongs to the GatB/GatE family. GatE subfamily. In terms of assembly, heterodimer of GatD and GatE.

It catalyses the reaction L-glutamyl-tRNA(Gln) + L-glutamine + ATP + H2O = L-glutaminyl-tRNA(Gln) + L-glutamate + ADP + phosphate + H(+). Functionally, allows the formation of correctly charged Gln-tRNA(Gln) through the transamidation of misacylated Glu-tRNA(Gln) in organisms which lack glutaminyl-tRNA synthetase. The reaction takes place in the presence of glutamine and ATP through an activated gamma-phospho-Glu-tRNA(Gln). The GatDE system is specific for glutamate and does not act on aspartate. The protein is Glutamyl-tRNA(Gln) amidotransferase subunit E of Pyrobaculum islandicum (strain DSM 4184 / JCM 9189 / GEO3).